A 155-amino-acid chain; its full sequence is UPF0735 ACT domain-containing protein CA_C1234 (155 aa).

The 76-residue stretch at 79-154 (TISILIEHRR…NVLKVEIVAM (76 aa)) folds into the ACT domain.

The protein belongs to the UPF0735 family.

The sequence is that of UPF0735 ACT domain-containing protein CA_C1234 from Clostridium acetobutylicum (strain ATCC 824 / DSM 792 / JCM 1419 / IAM 19013 / LMG 5710 / NBRC 13948 / NRRL B-527 / VKM B-1787 / 2291 / W).